A 377-amino-acid chain; its full sequence is Compound eye opsin BCRH2 (377 aa).

At 1 to 53 the chain is on the extracellular side; sequence MTNATGPQMAYYGAASMDFGYPEGVSIVDFVRPEIKPYVHQHWYNYPPVNPMW. N3 carries N-linked (GlcNAc...) asparagine glycosylation. A helical transmembrane segment spans residues 54 to 78; it reads HYLLGVIYLFLGTVSIFGNGLVIYL. Topologically, residues 79–90 are cytoplasmic; that stretch reads FNKSAALRTPAN. The helical transmembrane segment at 91–115 threads the bilayer; the sequence is ILVVNLALSDLIMLTTNVPFFTYNC. The Extracellular segment spans residues 116–131; it reads FSGGVWMFSPQYCEIY. The cysteines at positions 128 and 205 are disulfide-linked. Residues 132–151 traverse the membrane as a helical segment; sequence ACLGAITGVCSIWLLCMISF. Over 152–170 the chain is Cytoplasmic; sequence DRYNIICNGFNGPKLTTGK. A helical transmembrane segment spans residues 171–194; sequence AVVFALISWVIAIGCALPPFFGWG. The Extracellular portion of the chain corresponds to 195 to 218; the sequence is NYILEGILDSCSYDYLTQDFNTFS. Residues 219 to 246 traverse the membrane as a helical segment; that stretch reads YNIFIFVFDYFLPAAIIVFSYVFIVKAI. The Cytoplasmic portion of the chain corresponds to 247–281; that stretch reads FAHEAAMRAQAKKMNVSTLRSNEADAQRAEIRIAK. Residues 282-305 traverse the membrane as a helical segment; the sequence is TALVNVSLWFICWTPYALISLKGV. Over 306 to 313 the chain is Extracellular; that stretch reads MGDTSGIT. Residues 314 to 338 form a helical membrane-spanning segment; it reads PLVSTLPALLAKSCSCYNPFVYAIS. The residue at position 325 (K325) is an N6-(retinylidene)lysine. At 339–377 the chain is on the cytoplasmic side; the sequence is HPKYRLAITQHLPWFCVHETETKSNDDSQSNSTVAQDKA.

This sequence belongs to the G-protein coupled receptor 1 family. Opsin subfamily. Phosphorylated on some or all of the serine and threonine residues present in the C-terminal region. Expressed in all of the seven retinular cells (R1-R7) forming the main rhabdom in each ommatidium.

The protein localises to the membrane. Its function is as follows. Visual pigments are the light-absorbing molecules that mediate vision. They consist of an apoprotein, opsin, covalently linked to cis-retinal. This opsin produces visual pigments with maximal absorption in the blue-green region of the spectrum. The polypeptide is Compound eye opsin BCRH2 (Hemigrapsus sanguineus (Asian shore crab)).